Reading from the N-terminus, the 234-residue chain is Leucyl/phenylalanyl-tRNA--protein transferase (234 aa).

Belongs to the L/F-transferase family.

The protein localises to the cytoplasm. It carries out the reaction N-terminal L-lysyl-[protein] + L-leucyl-tRNA(Leu) = N-terminal L-leucyl-L-lysyl-[protein] + tRNA(Leu) + H(+). It catalyses the reaction N-terminal L-arginyl-[protein] + L-leucyl-tRNA(Leu) = N-terminal L-leucyl-L-arginyl-[protein] + tRNA(Leu) + H(+). The catalysed reaction is L-phenylalanyl-tRNA(Phe) + an N-terminal L-alpha-aminoacyl-[protein] = an N-terminal L-phenylalanyl-L-alpha-aminoacyl-[protein] + tRNA(Phe). In terms of biological role, functions in the N-end rule pathway of protein degradation where it conjugates Leu, Phe and, less efficiently, Met from aminoacyl-tRNAs to the N-termini of proteins containing an N-terminal arginine or lysine. This is Leucyl/phenylalanyl-tRNA--protein transferase from Shigella boydii serotype 18 (strain CDC 3083-94 / BS512).